We begin with the raw amino-acid sequence, 179 residues long: Large ribosomal subunit protein uL5 (179 aa).

Belongs to the universal ribosomal protein uL5 family. In terms of assembly, part of the 50S ribosomal subunit; part of the 5S rRNA/L5/L18/L25 subcomplex. Contacts the 5S rRNA and the P site tRNA. Forms a bridge to the 30S subunit in the 70S ribosome.

Functionally, this is one of the proteins that bind and probably mediate the attachment of the 5S RNA into the large ribosomal subunit, where it forms part of the central protuberance. In the 70S ribosome it contacts protein S13 of the 30S subunit (bridge B1b), connecting the 2 subunits; this bridge is implicated in subunit movement. Contacts the P site tRNA; the 5S rRNA and some of its associated proteins might help stabilize positioning of ribosome-bound tRNAs. The polypeptide is Large ribosomal subunit protein uL5 (Desulfitobacterium hafniense (strain Y51)).